The primary structure comprises 217 residues: Ribonuclease T (217 aa).

The Exonuclease domain maps to 20-194; the sequence is VVIDVETGGF…YDTDRTAELF (175 aa). Positions 23, 25, 181, and 186 each coordinate Mg(2+). H181 serves as the catalytic Proton donor/acceptor.

The protein belongs to the RNase T family. In terms of assembly, homodimer. The cofactor is Mg(2+).

In terms of biological role, trims short 3' overhangs of a variety of RNA species, leaving a one or two nucleotide 3' overhang. Responsible for the end-turnover of tRNA: specifically removes the terminal AMP residue from uncharged tRNA (tRNA-C-C-A). Also appears to be involved in tRNA biosynthesis. This chain is Ribonuclease T, found in Photorhabdus laumondii subsp. laumondii (strain DSM 15139 / CIP 105565 / TT01) (Photorhabdus luminescens subsp. laumondii).